The chain runs to 185 residues: Pyruvate/ketoisovalerate oxidoreductases common subunit gamma (185 aa).

Heterotetramer of one alpha, one beta, one delta and one gamma chain.

The enzyme catalyses 2 oxidized [2Fe-2S]-[ferredoxin] + pyruvate + CoA = 2 reduced [2Fe-2S]-[ferredoxin] + acetyl-CoA + CO2 + H(+). It catalyses the reaction 3-methyl-2-oxobutanoate + 2 oxidized [2Fe-2S]-[ferredoxin] + CoA = 2-methylpropanoyl-CoA + 2 reduced [2Fe-2S]-[ferredoxin] + CO2 + H(+). This Pyrococcus abyssi (strain GE5 / Orsay) protein is Pyruvate/ketoisovalerate oxidoreductases common subunit gamma (porG).